Here is a 77-residue protein sequence, read N- to C-terminus: Large ribosomal subunit protein uL24 (77 aa).

The disordered stretch occupies residues 42–61 (KKHQKPSQTNANGGVVESEG).

This sequence belongs to the universal ribosomal protein uL24 family. Part of the 50S ribosomal subunit.

Functionally, one of two assembly initiator proteins, it binds directly to the 5'-end of the 23S rRNA, where it nucleates assembly of the 50S subunit. Its function is as follows. One of the proteins that surrounds the polypeptide exit tunnel on the outside of the subunit. This chain is Large ribosomal subunit protein uL24, found in Lactobacillus acidophilus (strain ATCC 700396 / NCK56 / N2 / NCFM).